We begin with the raw amino-acid sequence, 617 residues long: Elongation factor 4 (617 aa).

Positions 17–198 (AIIRNFCIIA…KIVRDLPAPV (182 aa)) constitute a tr-type G domain. GTP-binding positions include 29–34 (DHGKST) and 145–148 (NKID).

This sequence belongs to the TRAFAC class translation factor GTPase superfamily. Classic translation factor GTPase family. LepA subfamily.

Its subcellular location is the cell membrane. It carries out the reaction GTP + H2O = GDP + phosphate + H(+). Functionally, required for accurate and efficient protein synthesis under certain stress conditions. May act as a fidelity factor of the translation reaction, by catalyzing a one-codon backward translocation of tRNAs on improperly translocated ribosomes. Back-translocation proceeds from a post-translocation (POST) complex to a pre-translocation (PRE) complex, thus giving elongation factor G a second chance to translocate the tRNAs correctly. Binds to ribosomes in a GTP-dependent manner. The chain is Elongation factor 4 from Paenarthrobacter aurescens (strain TC1).